We begin with the raw amino-acid sequence, 37 residues long: Potassium channel toxin alpha-KTx 1.4 (37 aa).

3 cysteine pairs are disulfide-bonded: C7-C28, C13-C33, and C17-C35.

Belongs to the short scorpion toxin superfamily. Potassium channel inhibitor family. Alpha-KTx 01 subfamily. Expressed by the venom gland.

The protein localises to the secreted. Blocks selectively the high conductance calcium-activated (maxi-K) potassium channels. The polypeptide is Potassium channel toxin alpha-KTx 1.4 (Centruroides limbatus (Bark scorpion)).